Reading from the N-terminus, the 633-residue chain is Dynein axonemal assembly factor 1 (633 aa).

Positions methionine 1–proline 80 are disordered. Basic and acidic residues predominate over residues alanine 22–glutamate 42. A compositionally biased stretch (low complexity) spans glycine 46–glycine 60. Residues histidine 70–proline 80 show a composition bias toward basic and acidic residues. LRR repeat units lie at residues alanine 101–threonine 123, glycine 124–serine 145, glutamate 146–glutamine 167, lysine 168–proline 189, valine 190–arginine 211, and glutamine 215–glutamate 236. In terms of domain architecture, LRRCT spans asparagine 249–tryptophan 288. Residues glutamate 326 to lysine 344 show a composition bias toward basic and acidic residues. 2 disordered regions span residues glutamate 326–lysine 364 and leucine 404–aspartate 436. Serine 349 bears the Phosphoserine mark. A compositionally biased stretch (basic and acidic residues) spans alanine 352 to lysine 364. Over residues threonine 413–glutamate 427 the composition is skewed to low complexity. Threonine 462 is modified (phosphothreonine). A phosphoserine mark is found at serine 465 and serine 488. 2 stretches are compositionally biased toward polar residues: residues threonine 538–proline 555 and glycine 568–glycine 592. Residues threonine 538–aspartate 633 are disordered.

It belongs to the DNAAF1 family.

It localises to the cell projection. Its subcellular location is the cilium. In terms of biological role, cilium-specific protein required for the stability of the ciliary architecture. Plays a role in cytoplasmic preassembly of dynein arms. Involved in regulation of microtubule-based cilia and actin-based brush border microvilli. The sequence is that of Dynein axonemal assembly factor 1 (Dnaaf1) from Rattus norvegicus (Rat).